Reading from the N-terminus, the 211-residue chain is Hypoxanthine-guanine phosphoribosyltransferase (211 aa).

The disordered stretch occupies residues 1-20 (MSNSAKSPSGPVGDEGRRNY). Residues Lys-66, 125-133 (EDIVDSAIT), Lys-157, and Asp-185 each bind GMP. Asp-129 acts as the Proton acceptor in catalysis. A Mg(2+)-binding site is contributed by Asp-185.

It belongs to the purine/pyrimidine phosphoribosyltransferase family. Requires Mg(2+) as cofactor.

The protein localises to the cytoplasm. It carries out the reaction IMP + diphosphate = hypoxanthine + 5-phospho-alpha-D-ribose 1-diphosphate. The catalysed reaction is GMP + diphosphate = guanine + 5-phospho-alpha-D-ribose 1-diphosphate. Its pathway is purine metabolism; IMP biosynthesis via salvage pathway; IMP from hypoxanthine: step 1/1. In terms of biological role, converts guanine to guanosine monophosphate, and hypoxanthine to inosine monophosphate. Transfers the 5-phosphoribosyl group from 5-phosphoribosylpyrophosphate onto the purine. Plays a central role in the generation of purine nucleotides through the purine salvage pathway. The polypeptide is Hypoxanthine-guanine phosphoribosyltransferase (Leishmania donovani).